A 1276-amino-acid chain; its full sequence is MTLTERLREKISQAFYNHGLLCASYPIPIILFTGLCILACCYPLLKLPLPGTGPVEFSTPVKDYSPPPVDSDHKQGEPSEQPEWYVGAPVAYIQQIFVKSSVSPWHKNLLAVDVFRLPLSRAFQLVEEIRNHVLRDSSGTKSLEEVCLQVTDLLPGLRKLRNLLPEHGCLLLSPGNFWQNDWERFHADPDIIGTIHQHEPKTLQTSATLKDLLFGVPGKYSGVSLYTRKRTVSYTITLVFQRYHAKFLSSLRARLMLLHPSPNCSLRAENLVHVHFKEEIGIAELIPLVTTYIILFAYIYFSTRKIDMVKSKWGLALAAVVTVLSSLLMSVGLCTLFGLTPTLNGGEIFPYLVVVIGLENVLVLTKSVVSTPVDLEVKLRIAQGLSSESWSIMKNVATELGIILIGYFTLVPAIQEFCLFAVVGLVSDFFLQMFFFTTVLSIDIRRMELADLNKRLPPESCLPSAKPVGRPARYERQLAVRPAMPHTITLQPSSFRNLRLPKRLRVIYFLARTRLAQRLIMAGTVVWIGILVYTDPAGLRTYLAAQVTEQSPLGEGSLGPMPVPSGVLPASRPDPAFSIFPPDAPKLPENQTVPGELPEHAAPAEGVHDSRAPEVTWGPEDEELWRRLSFRHWPTLFNYYNITLAKRYISLLPVIPVTLRLNPQEALEGRQPQDGRSAWAPPESLPAGLWEAGPKGPGGTQAHGDITLYKVAALGLAAGIVLVLLLLCLYRVLCPRNYGQPGGGAGRRRRGELPCDDYGYAPPETEIVPLVLRGHLMDIECLASDGMLLVSCCLAGQVCVWDAQTGDCLTRIPRPGSRRDSCGGGAFETQENWERLSDGGKTSPEEPGESPPLRHRPRGPPQPALFGDQPDLTCLIDTNFSVQLPPEPTQPEPRHRAGCGRARDSGYDFSRLVQRVYQEEGLAAVRMPALRPPSPGSPLPQASQEDGAAPEKGSPPLAWAPSTAGSIWSLELQGNLIVVGRSSGRLEVWDAIEGVLCCSNDEVSSGITALVFLDRRIVAARLNGSLDFFSLETHTSLSPLQFRGTPGRGSSPSSSVYSSSNTVACHLTHTVPCAHQKPITALRAAAGRLVTGSQDHTLRVFRLEDSCCLFTLQGHSGAITTVYIDQTMVLASGGQDGAICLWDVLTGSRVSHTFAHRGDVTSLTCTTSCVISSGLDDLINIWDRSTGIKLYSIQQDLGCGASLGVISDNLLVTGGQGCVSFWDLNYGDLLQTVYLGKNSEAQPARQILVLDNAAIVCNFGSELSLVYVPSVLEKLD.

Topologically, residues 1–18 (MTLTERLREKISQAFYNH) are cytoplasmic. Residues 19–39 (GLLCASYPIPIILFTGLCILA) form a helical membrane-spanning segment. Residues 40–279 (CCYPLLKLPL…NLVHVHFKEE (240 aa)) are Lumenal-facing. The loop-1 stretch occupies residues 46 to 284 (KLPLPGTGPV…HFKEEIGIAE (239 aa)). A disordered region spans residues 60–81 (PVKDYSPPPVDSDHKQGEPSEQ). Asn263 carries an N-linked (GlcNAc...) asparagine glycan. Residues 280 to 300 (IGIAELIPLVTTYIILFAYIY) traverse the membrane as a helical segment. Residues 284 to 442 (ELIPLVTTYI…MFFFTTVLSI (159 aa)) enclose the SSD domain. The Cytoplasmic portion of the chain corresponds to 301–312 (FSTRKIDMVKSK). A helical membrane pass occupies residues 313-333 (WGLALAAVVTVLSSLLMSVGL). Topologically, residues 334-344 (CTLFGLTPTLN) are lumenal. Residues 345–365 (GGEIFPYLVVVIGLENVLVLT) traverse the membrane as a helical segment. The Cytoplasmic segment spans residues 366–401 (KSVVSTPVDLEVKLRIAQGLSSESWSIMKNVATELG). Residues 402 to 422 (IILIGYFTLVPAIQEFCLFAV) traverse the membrane as a helical segment. Residue Val423 is a topological domain, lumenal. A helical membrane pass occupies residues 424-444 (GLVSDFFLQMFFFTTVLSIDI). Over 445–518 (RRMELADLNK…FLARTRLAQR (74 aa)) the chain is Cytoplasmic. The ER export signal motif lies at 447-452 (MELADL). Residues Lys454 and Lys466 each participate in a glycyl lysine isopeptide (Lys-Gly) (interchain with G-Cter in ubiquitin) cross-link. Residues 519–539 (LIMAGTVVWIGILVYTDPAGL) traverse the membrane as a helical segment. Positions 535–710 (DPAGLRTYLA…QAHGDITLYK (176 aa)) are loop-7. Residues 540 to 708 (RTYLAAQVTE…GTQAHGDITL (169 aa)) lie on the Lumenal side of the membrane. Asn590 and Asn641 each carry an N-linked (GlcNAc...) asparagine glycan. The chain crosses the membrane as a helical span at residues 709 to 729 (YKVAALGLAAGIVLVLLLLCL). Residues 730–1276 (YRVLCPRNYG…YVPSVLEKLD (547 aa)) are Cytoplasmic-facing. The interaction with SREBF2 stretch occupies residues 731–1276 (RVLCPRNYGQ…YVPSVLEKLD (546 aa)). A WD 1 repeat occupies 771–811 (VLRGHLMDIECLASDGMLLVSCCLAGQVCVWDAQTGDCLTR). The segment at 816–903 (GSRRDSCGGG…RHRAGCGRAR (88 aa)) is disordered. Phosphoserine is present on residues Ser821, Ser837, Ser843, Ser850, Ser905, and Ser934. Positions 928–957 (PALRPPSPGSPLPQASQEDGAAPEKGSPPL) are disordered. 2 WD repeats span residues 949–999 (APEK…LCCS) and 1002–1039 (EVSS…SLSP). Arg1048 is modified (omega-N-methylarginine). WD repeat units lie at residues 1074 to 1111 (AHQK…CLFT), 1114 to 1152 (GHSG…RVSH), 1155 to 1192 (AHRG…KLYS), and 1194 to 1232 (QQDL…LLQT).

The protein belongs to the WD repeat SCAP family. As to quaternary structure, membrane region forms a homotetramer. Component of the SCAP-SREBP complex (composed of SCAP and SREBF1/SREBP1 or SREBF2/SREBP2); interacts with SREBF1/SREBP1 or SREBF2/SREBP2 through its C-terminal cytoplasmic domain. Forms a ternary complex with INSIG1 or INSIG2 through its transmembrane domains at high sterol concentrations. Interacts with PAQR3; the interaction anchors the SCAP-SREBP complex to the Golgi apparatus in low cholesterol conditions. Interacts with the SEC23-SEC24 complex in a SAR1-GTP-dependent manner through an ER export signal in its third cytoplasmic loop. Interacts with RNF139; the interaction inhibits the interaction of SCAP with SEC24B and hampering the ER to Golgi transport of the SCAP-SREBP complex. Interacts with SPRING. Ubiquitinated at Lys-454 and Lys-466. RNF145 triggers ubiquitination of SCAP, likely inhibiting SCAP-SREBP complex transport to the Golgi apparatus and the subsequent processing/maturation of SREBF2/SREBP2.

It localises to the endoplasmic reticulum membrane. It is found in the golgi apparatus membrane. Its subcellular location is the cytoplasmic vesicle. The protein resides in the COPII-coated vesicle membrane. Its function is as follows. Escort protein required for cholesterol as well as lipid homeostasis. Regulates export of the SCAP-SREBP complex from the endoplasmic reticulum to the Golgi upon low cholesterol, thereby regulating the processing of sterol regulatory element-binding proteins (SREBPs) SREBF1/SREBP1 and SREBF2/SREBP2. At high sterol concentrations, formation of a ternary complex with INSIG (INSIG1 or INSIG2) leads to mask the ER export signal in SCAP, promoting retention of the complex in the endoplasmic reticulum. Low sterol concentrations trigger release of INSIG, a conformational change in the SSD domain of SCAP, unmasking of the ER export signal, promoting recruitment into COPII-coated vesicles and transport of the SCAP-SREBP to the Golgi: in the Golgi, SREBPs are then processed, releasing the transcription factor fragment of SREBPs from the membrane, its import into the nucleus and up-regulation of LDLR, INSIG1 and the mevalonate pathway. Binds cholesterol via its SSD domain. This chain is Sterol regulatory element-binding protein cleavage-activating protein, found in Cricetulus griseus (Chinese hamster).